A 208-amino-acid polypeptide reads, in one-letter code: Small ribosomal subunit protein uS4 (208 aa).

The disordered stretch occupies residues 30-49 (EKRPYAPGEHGRDRRRTESD). One can recognise an S4 RNA-binding domain in the interval 95–161 (TRLDNLVLRA…VPFQIAAEGV (67 aa)).

Belongs to the universal ribosomal protein uS4 family. Part of the 30S ribosomal subunit. Contacts protein S5. The interaction surface between S4 and S5 is involved in control of translational fidelity.

Its function is as follows. One of the primary rRNA binding proteins, it binds directly to 16S rRNA where it nucleates assembly of the body of the 30S subunit. In terms of biological role, with S5 and S12 plays an important role in translational accuracy. This Bifidobacterium longum (strain DJO10A) protein is Small ribosomal subunit protein uS4.